The primary structure comprises 342 residues: Protein RecA (342 aa).

An ATP-binding site is contributed by 65-72 (GPESSGKT).

It belongs to the RecA family.

The protein resides in the cytoplasm. Its function is as follows. Can catalyze the hydrolysis of ATP in the presence of single-stranded DNA, the ATP-dependent uptake of single-stranded DNA by duplex DNA, and the ATP-dependent hybridization of homologous single-stranded DNAs. It interacts with LexA causing its activation and leading to its autocatalytic cleavage. This chain is Protein RecA, found in Teredinibacter turnerae (strain ATCC 39867 / T7901).